The primary structure comprises 788 residues: Pyridoxal-dependent decarboxylase domain-containing protein 1 (788 aa).

The segment covering 28–40 (EDSQRRTEEENGK) has biased composition (basic and acidic residues). Residues 28–51 (EDSQRRTEEENGKKLISGDIPGPL) are disordered. Thr414 is subject to Phosphothreonine. The residue at position 652 (Ser652) is a Phosphoserine. The segment at 684 to 788 (AGVTLPPTPS…SQVEGPESLR (105 aa)) is disordered. Phosphothreonine is present on residues Thr687 and Thr691. 3 positions are modified to phosphoserine: Ser710, Ser718, and Ser722. The span at 725–734 (HIEDLEKVER) shows a compositional bias: basic and acidic residues. Residues 738–750 (GPEQITLEASSTE) are compositionally biased toward polar residues. Residues Ser748, Ser757, Ser779, and Ser786 each carry the phosphoserine modification. Residues 772-788 (PHPEDDHSQVEGPESLR) are compositionally biased toward basic and acidic residues.

Belongs to the group II decarboxylase family. It depends on pyridoxal 5'-phosphate as a cofactor.

This is Pyridoxal-dependent decarboxylase domain-containing protein 1 (PDXDC1) from Homo sapiens (Human).